The following is a 485-amino-acid chain: Aspartyl/glutamyl-tRNA(Asn/Gln) amidotransferase subunit B (485 aa).

It belongs to the GatB/GatE family. GatB subfamily. In terms of assembly, heterotrimer of A, B and C subunits.

It catalyses the reaction L-glutamyl-tRNA(Gln) + L-glutamine + ATP + H2O = L-glutaminyl-tRNA(Gln) + L-glutamate + ADP + phosphate + H(+). The enzyme catalyses L-aspartyl-tRNA(Asn) + L-glutamine + ATP + H2O = L-asparaginyl-tRNA(Asn) + L-glutamate + ADP + phosphate + 2 H(+). Allows the formation of correctly charged Asn-tRNA(Asn) or Gln-tRNA(Gln) through the transamidation of misacylated Asp-tRNA(Asn) or Glu-tRNA(Gln) in organisms which lack either or both of asparaginyl-tRNA or glutaminyl-tRNA synthetases. The reaction takes place in the presence of glutamine and ATP through an activated phospho-Asp-tRNA(Asn) or phospho-Glu-tRNA(Gln). The protein is Aspartyl/glutamyl-tRNA(Asn/Gln) amidotransferase subunit B of Bordetella avium (strain 197N).